The following is a 262-amino-acid chain: Tryptophan synthase alpha chain (262 aa).

Active-site proton acceptor residues include E49 and D60.

Belongs to the TrpA family. Tetramer of two alpha and two beta chains.

The catalysed reaction is (1S,2R)-1-C-(indol-3-yl)glycerol 3-phosphate + L-serine = D-glyceraldehyde 3-phosphate + L-tryptophan + H2O. The protein operates within amino-acid biosynthesis; L-tryptophan biosynthesis; L-tryptophan from chorismate: step 5/5. In terms of biological role, the alpha subunit is responsible for the aldol cleavage of indoleglycerol phosphate to indole and glyceraldehyde 3-phosphate. The chain is Tryptophan synthase alpha chain from Thermoanaerobacter pseudethanolicus (strain ATCC 33223 / 39E) (Clostridium thermohydrosulfuricum).